We begin with the raw amino-acid sequence, 711 residues long: Forkhead box protein P1 (711 aa).

Polar residues predominate over residues 1-19 (MMQESGSEAKSNGSTIQNG). Residues 1 to 41 (MMQESGSEAKSNGSTIQNGSSGGNHLLECGTLRDTRSNGEA) form a disordered region. A Phosphoserine modification is found at S115. Disordered regions lie at residues 273-292 (HTAE…TSTC) and 305-332 (MNPH…EHPH). Residues 305 to 317 (MNPHASTNGQLSV) are compositionally biased toward polar residues. Residues 320-332 (PKRESLSHEEHPH) show a composition bias toward basic and acidic residues. K321 participates in a covalent cross-link: Glycyl lysine isopeptide (Lys-Gly) (interchain with G-Cter in SUMO2). The C2H2-type zinc finger occupies 340–365 (GVCKWPGCEAVCDDFPAFLKHLNSEH). Residues 382–403 (VQQLELQLAKDKERLQAMMTHL) are leucine-zipper. Residues K406 and K411 each participate in a glycyl lysine isopeptide (Lys-Gly) (interchain with G-Cter in SUMO2) cross-link. The CTBP1-binding stretch occupies residues 416–420 (PLNLV). A compositionally biased stretch (polar residues) spans 424–437 (TLSKSASEASPQSL). Residues 424 to 456 (TLSKSASEASPQSLPHTPTTPTAPLTPVTQGPS) form a disordered region. Low complexity predominate over residues 438–452 (PHTPTTPTAPLTPVT). A Glycyl lysine isopeptide (Lys-Gly) (interchain with G-Cter in SUMO2) cross-link involves residue K476. Residues 499–589 (RPPFTYASLI…PQKISGNPSL (91 aa)) constitute a DNA-binding region (fork-head). Positions 645-711 (EHTNSNESDS…EDEPVNEDME (67 aa)) are disordered. Residues 646-657 (HTNSNESDSSPG) show a composition bias toward polar residues. T687 carries the phosphothreonine modification. S692 carries the phosphoserine modification. Over residues 701-711 (YEDEPVNEDME) the composition is skewed to acidic residues.

Forms homodimers and heterodimers with FOXP2 and FOXP4. Dimerization is required for DNA-binding. Self-associates. Interacts with CTBP1. Interacts with NCOR2 and AR. Interacts with FOXP2. Interacts with TBR1. Interacts with AURKA; this interaction facilitates the phosphorylation of FOXP1, which suppresses the expression of FBXL7. Interacts with ZMYM2.

It is found in the nucleus. Functionally, transcriptional repressor. Can act with CTBP1 to synergistically repress transcription but CTPBP1 is not essential. Plays an important role in the specification and differentiation of lung epithelium. Acts cooperatively with FOXP4 to regulate lung secretory epithelial cell fate and regeneration by restricting the goblet cell lineage program; the function may involve regulation of AGR2. Essential transcriptional regulator of B-cell development. Involved in regulation of cardiac muscle cell proliferation. Involved in the columnar organization of spinal motor neurons. Promotes the formation of the lateral motor neuron column (LMC) and the preganglionic motor column (PGC) and is required for respective appropriate motor axon projections. The segment-appropriate generation of spinal cord motor columns requires cooperation with other Hox proteins. Can regulate PITX3 promoter activity; may promote midbrain identity in embryonic stem cell-derived dopamine neurons by regulating PITX3. Negatively regulates the differentiation of T follicular helper cells T(FH)s. Involved in maintenance of hair follicle stem cell quiescence; the function probably involves regulation of FGF18. Represses transcription of various pro-apoptotic genes and cooperates with NF-kappa B-signaling in promoting B-cell expansion by inhibition of caspase-dependent apoptosis. Binds to CSF1R promoter elements and is involved in regulation of monocyte differentiation and macrophage functions; repression of CSF1R in monocytes seems to involve NCOR2 as corepressor. Involved in endothelial cell proliferation, tube formation and migration indicative for a role in angiogenesis; the role in neovascularization seems to implicate suppression of SEMA5B. Can negatively regulate androgen receptor signaling. Acts as a transcriptional activator of the FBXL7 promoter; this activity is regulated by AURKA. The protein is Forkhead box protein P1 (Foxp1) of Rattus norvegicus (Rat).